A 210-amino-acid chain; its full sequence is Thymidylate kinase (210 aa).

ATP is bound at residue 10–17 (GIDGCGKT).

It belongs to the thymidylate kinase family.

It catalyses the reaction dTMP + ATP = dTDP + ADP. Phosphorylation of dTMP to form dTDP in both de novo and salvage pathways of dTTP synthesis. In Prochlorococcus marinus (strain MIT 9515), this protein is Thymidylate kinase.